A 420-amino-acid chain; its full sequence is Acetyl-CoA acetyltransferase A, mitochondrial (420 aa).

A mitochondrion-targeting transit peptide spans 1 to 33 (MAFCGTRTAARLSHSTRALHNTHRNFASQRTLN). The Acyl-thioester intermediate role is filled by C119. CoA contacts are provided by residues Y212, 251-253 (RVD), and K256. Y212 lines the K(+) pocket. K(+) contacts are provided by A273 and A274. S277 provides a ligand contact to CoA. V374 serves as a coordination point for K(+). The active-site Proton donor/acceptor is C406.

It belongs to the thiolase-like superfamily. Thiolase family. In terms of assembly, homotetramer.

It localises to the mitochondrion. It carries out the reaction 2 acetyl-CoA = acetoacetyl-CoA + CoA. The catalysed reaction is propanoyl-CoA + acetyl-CoA = 2-methyl-3-oxobutanoyl-CoA + CoA. Its pathway is lipid metabolism; fatty acid beta-oxidation. Functionally, this is one of the enzymes that catalyzes the last step of the mitochondrial beta-oxidation pathway, an aerobic process breaking down fatty acids into acetyl-CoA. Using free coenzyme A/CoA, catalyzes the thiolytic cleavage of medium- to long-chain 3-oxoacyl-CoAs into acetyl-CoA and a fatty acyl-CoA shortened by two carbon atoms. The activity of the enzyme is reversible and it can also catalyze the condensation of two acetyl-CoA molecules into acetoacetyl-CoA. Thereby, it plays a major role in ketone body metabolism. The polypeptide is Acetyl-CoA acetyltransferase A, mitochondrial (acat1-a) (Xenopus laevis (African clawed frog)).